The following is a 461-amino-acid chain: MAPAPSPINSQHVAVIGAGAAGLVAARELRREGHTVVVLDREKQVGGLWVYTPETESDELGLDPTRPIVHSSVYKSLRTNLPRECMGYKDFPFVPRGDDPSRDSRRYPSHREVLAYLQDFATEFNIEEMIRFETEVLRVEPVNGKWRVQSKTGGGFSNDEIYDAVVMCCGHFAEPNIAQIPGIESWPGRQTHSHSYRVPDPFKDEVVVVIGNFASGADISRDISKVAKEVHIASRASKSNTFEKRPVPNNNLWMHSEIDTAHEDGTIVFKNGKVVHADTIVHCTGYKYYFPFLETNNYMRVDDNRVEPLYKHIFPPALAPGLSFIGLPAMGLQFYMFEVQSKWVAAVLSGRVTLPSVDEMMDDLKLSYETQEALGIPKRYTHKLGKSQCEYLDWIADLCGFPHVEHWRDQEVTRGYQRLGNQPETFRDEWDDDDLMEEAYEDFARLNLINFHPSRFLESGR.

Position 17–22 (17–22 (GAGAAG)) interacts with FAD. 211–216 (GNFASG) lines the NADP(+) pocket.

The protein belongs to the FMO family.

The catalysed reaction is a (Z)-omega-(methylsulfanyl)-N-sulfo-alkylhydroximate S-glucoside + NADPH + O2 + H(+) = a (Z)-omega-(methylsulfinyl)-alkyl-glucosinolate + NADP(+) + H2O. In terms of biological role, catalyzes the conversion of methylthioalkyl glucosinolates of any chain length into methylsulfinylalkyl glucosinolates. The polypeptide is Flavin-containing monooxygenase FMO GS-OX4 (FMOGS-OX4) (Arabidopsis thaliana (Mouse-ear cress)).